Reading from the N-terminus, the 627-residue chain is Ras and EF-hand domain-containing protein homolog (627 aa).

Residues 55–245 adopt a coiled-coil conformation; it reads YERVIRNFLR…RKLHDSNDGL (191 aa). Ser-266 and Ser-272 each carry phosphoserine. GTP-binding positions include 438–443, 541–544, and 578–579; these read AVGKSS, NKAD, and AK.

The protein belongs to the small GTPase superfamily. Rab family. Homodimer. Interacts with the dynein-dynactin complex.

Its subcellular location is the cytoplasm. It is found in the perinuclear region. Functionally, binds predominantly GDP, and also GTP. Acts as a dynein adapter protein that activates dynein-mediated transport and dynein-dynactin motility on microtubules. In Mus musculus (Mouse), this protein is Ras and EF-hand domain-containing protein homolog (Rasef).